Reading from the N-terminus, the 413-residue chain is Ras association domain-containing protein 5 (413 aa).

Residues 1–103 form a disordered region; that stretch reads MASPAIGQRP…RPRDVRSIFE (103 aa). Basic and acidic residues predominate over residues 52–74; that stretch reads SEDRGGRRSGRRDPEPTPRDCRH. The segment at 117–165 adopts a Phorbol-ester/DAG-type zinc-finger fold; the sequence is GHRFVELALRGGPGWCDLCGREVLRQALRCANCKFTCHSECRSLIQLDC. Phosphoserine is present on residues S177 and S274. Residues 265-359 form the Ras-associating domain; sequence PAATTDKRTS…LSFVLKENET (95 aa). The residue at position 347 (T347) is a Phosphothreonine. Positions 361-408 constitute an SARAH domain; that stretch reads EVEWDAFSIPELQNFLTILEKEEQDKIHQLQKKYNKFRQKLEEALRES.

Interacts directly with activated HRAS; a RASSF5-STK4/MST1 complex probably associates with activated HRAS. Interacts with KRAS. Probably interacts with Ras-like GTPases RRAS, MRAS, RAP1B, RAP2A and RALA. Interacts with RRAS2. Can self-associate. Interacts with RSSF1 isoform A. The RSSF1 isoform A-RSSF5 heterodimer probably mediates the association of RSSF1 with HRAS. Isoform 2 interacts with activated RAP1A and ITGAL/LFA-1. Binds STK4/MST1, inhibiting STK4/MST1 autoactivation.

The protein resides in the cytoplasm. The protein localises to the cytoskeleton. In terms of biological role, potential tumor suppressor. Seems to be involved in lymphocyte adhesion by linking RAP1A activation upon T-cell receptor or chemokine stimulation to integrin activation. Isoform 2 stimulates lymphocyte polarization and the patch-like distribution of ITGAL/LFA-1, resulting in an enhanced adhesion to ICAM1. Together with RAP1A may participate in regulation of microtubule growth. The association of isoform 2 with activated RAP1A is required for directional movement of endothelial cells during wound healing. May be involved in regulation of Ras apoptotic function. The RASSF5-STK4/MST1 complex may mediate HRAS and KRAS induced apoptosis. In Mus musculus (Mouse), this protein is Ras association domain-containing protein 5 (Rassf5).